The primary structure comprises 1210 residues: Homeodomain-interacting protein kinase 1 (1210 aa).

Lysine 25 is covalently cross-linked (Glycyl lysine isopeptide (Lys-Gly) (interchain with G-Cter in SUMO); alternate). Residue lysine 25 forms a Glycyl lysine isopeptide (Lys-Gly) (interchain with G-Cter in SUMO2); alternate linkage. Glycyl lysine isopeptide (Lys-Gly) (interchain with G-Cter in SUMO2) cross-links involve residues lysine 120 and lysine 124. Positions 190-518 constitute a Protein kinase domain; sequence YEVLEFLGRG…PLKTLNHQFV (329 aa). ATP-binding positions include 196–204 and lysine 219; that span reads LGRGTFGQV. The Proton acceptor role is filled by aspartate 315. Residues 835–856 form a disordered region; it reads QQQSSSLPSKKNKQSAPVSSKS. The Nuclear localization signal 1 (NLS1) motif lies at 844–847; it reads KKNK. A Phosphoserine modification is found at serine 872. The tract at residues 885 to 1093 is interaction with TP53; that stretch reads PVQDQHQPII…FQHGSPLHST (209 aa). The required for localization to nuclear speckles stretch occupies residues 891–998; that stretch reads QPIIIPDTPS…PLKTQLGDCT (108 aa). Residues 902–926 form an SUMO interaction motifs (SIM); required for nuclear localization and kinase activity region; sequence PVSVITIRSDTDEEEDNKYKPNSSS. The tract at residues 938 to 981 is disordered; sequence TVNDSPDSDSSLSSPHPTDTLSALRGNSGTLLEGPGRPAADGIG. Residues 941–959 are compositionally biased toward low complexity; sequence DSPDSDSSLSSPHPTDTLS. Residue lysine 991 forms a Glycyl lysine isopeptide (Lys-Gly) (interchain with G-Cter in SUMO2) linkage. Disordered regions lie at residues 1046–1069 and 1084–1104; these read LSQN…APRR and FQHG…APAH. 2 stretches are compositionally biased toward low complexity: residues 1047 to 1063 and 1095 to 1104; these read SQNQ…ERSS and HPHLAPAPAH. Residue serine 1200 is modified to Phosphoserine. Residue lysine 1203 forms a Glycyl lysine isopeptide (Lys-Gly) (interchain with G-Cter in SUMO) linkage.

The protein belongs to the protein kinase superfamily. CMGC Ser/Thr protein kinase family. HIPK subfamily. In terms of assembly, interacts with Nkx1-2, Nkx2-5, MYB, PARK7, DAXX and p53/TP53. Part of a cytoplasmic complex made of HIPK1, DAB2IP and MAP3K5 in response to TNF. This complex formation promotes MAP3K5-JNK activation and subsequent apoptosis. In terms of processing, phosphorylated and activated by JNK1. Autophosphorylated. Sumoylated. When conjugated it is directed to nuclear speckles. SENP1-mediated desumoylation is mediated by TNF in response to stress stimuli, triggering transient translocation from nucleus to cytoplasm. In terms of tissue distribution, ubiquitously expressed, with high levels in reproductive tissues. Expressed in the epithelial layer of mammary gland, uterus and epididymis, in the corpus luteum, and in post-meiotic round spermatids.

It is found in the nucleus. It localises to the cytoplasm. Its subcellular location is the nucleus speckle. The catalysed reaction is L-seryl-[protein] + ATP = O-phospho-L-seryl-[protein] + ADP + H(+). It carries out the reaction L-threonyl-[protein] + ATP = O-phospho-L-threonyl-[protein] + ADP + H(+). Functionally, serine/threonine-protein kinase involved in transcription regulation and TNF-mediated cellular apoptosis. Plays a role as a corepressor for homeodomain transcription factors. Phosphorylates DAXX and MYB. Phosphorylates DAXX in response to stress, and mediates its translocation from the nucleus to the cytoplasm. Inactivates MYB transcription factor activity by phosphorylation. Prevents MAP3K5-JNK activation in the absence of TNF. TNF triggers its translocation to the cytoplasm in response to stress stimuli, thus activating nuclear MAP3K5-JNK by derepression and promoting apoptosis. May be involved in anti-oxidative stress responses. Involved in the regulation of eye size, lens formation and retinal lamination during late embryogenesis. Promotes angiogenesis and to be involved in erythroid differentiation. May be involved in malignant squamous cell tumor formation. Phosphorylates PAGE4 at 'Thr-51' which is critical for the ability of PAGE4 to potentiate the transcriptional activator activity of JUN. This is Homeodomain-interacting protein kinase 1 (Hipk1) from Mus musculus (Mouse).